The chain runs to 266 residues: Hydroxyethylthiazole kinase (266 aa).

Met39 provides a ligand contact to substrate. ATP contacts are provided by Lys115 and Thr160. Gly187 is a substrate binding site.

This sequence belongs to the Thz kinase family. The cofactor is Mg(2+).

It carries out the reaction 5-(2-hydroxyethyl)-4-methylthiazole + ATP = 4-methyl-5-(2-phosphooxyethyl)-thiazole + ADP + H(+). It participates in cofactor biosynthesis; thiamine diphosphate biosynthesis; 4-methyl-5-(2-phosphoethyl)-thiazole from 5-(2-hydroxyethyl)-4-methylthiazole: step 1/1. Catalyzes the phosphorylation of the hydroxyl group of 4-methyl-5-beta-hydroxyethylthiazole (THZ). In Staphylococcus aureus (strain MSSA476), this protein is Hydroxyethylthiazole kinase.